The following is a 228-amino-acid chain: Ribosomal RNA large subunit methyltransferase E (228 aa).

The S-adenosyl-L-methionine site is built by Gly-76, Trp-78, Asp-99, Asp-115, and Asp-139. Lys-179 functions as the Proton acceptor in the catalytic mechanism.

Belongs to the class I-like SAM-binding methyltransferase superfamily. RNA methyltransferase RlmE family.

It localises to the cytoplasm. The catalysed reaction is uridine(2552) in 23S rRNA + S-adenosyl-L-methionine = 2'-O-methyluridine(2552) in 23S rRNA + S-adenosyl-L-homocysteine + H(+). Its function is as follows. Specifically methylates the uridine in position 2552 of 23S rRNA at the 2'-O position of the ribose in the fully assembled 50S ribosomal subunit. This is Ribosomal RNA large subunit methyltransferase E from Nitrobacter hamburgensis (strain DSM 10229 / NCIMB 13809 / X14).